A 149-amino-acid polypeptide reads, in one-letter code: Large ribosomal subunit protein uL11 (149 aa).

The protein belongs to the universal ribosomal protein uL11 family. As to quaternary structure, part of the ribosomal stalk of the 50S ribosomal subunit. Interacts with L10 and the large rRNA to form the base of the stalk. L10 forms an elongated spine to which L12 dimers bind in a sequential fashion forming a multimeric L10(L12)X complex. One or more lysine residues are methylated.

Forms part of the ribosomal stalk which helps the ribosome interact with GTP-bound translation factors. The polypeptide is Large ribosomal subunit protein uL11 (Xanthobacter autotrophicus (strain ATCC BAA-1158 / Py2)).